Reading from the N-terminus, the 221-residue chain is MDYSDPAELRESYDGAPLDPRGLAPQPMDQFHAWFTEACEAELSEPNAMVLSTVDPDGAPSARTVLLKGYDRRGLRFFTNYRSRKGVALAREPRACVVFPWHAIRRQVIVYGFAERLSDEENDAYFAQRPHGSQLGAWASEYQSAPVADRAELDRAYARCAEQWPPGTPVPRPEYWGGFLLVPQEVEFWQGRSDRMHDRFRYRLVSGTPSEGAWQIDRLSP.

The interval Met1–Arg21 is disordered. Substrate-binding positions include Arg10 to Tyr13 and Lys68. FMN contacts are provided by residues Arg63–Lys68, Phe78–Thr79, Arg84, Lys85, and Gln107. The substrate site is built by Tyr125, Arg129, and Ser133. FMN-binding positions include Gln143–Ser144 and Trp189. Arg195 to His197 is a substrate binding site. Arg199 provides a ligand contact to FMN.

It belongs to the pyridoxamine 5'-phosphate oxidase family. In terms of assembly, homodimer. FMN serves as cofactor.

The catalysed reaction is pyridoxamine 5'-phosphate + O2 + H2O = pyridoxal 5'-phosphate + H2O2 + NH4(+). It carries out the reaction pyridoxine 5'-phosphate + O2 = pyridoxal 5'-phosphate + H2O2. It participates in cofactor metabolism; pyridoxal 5'-phosphate salvage; pyridoxal 5'-phosphate from pyridoxamine 5'-phosphate: step 1/1. It functions in the pathway cofactor metabolism; pyridoxal 5'-phosphate salvage; pyridoxal 5'-phosphate from pyridoxine 5'-phosphate: step 1/1. Functionally, catalyzes the oxidation of either pyridoxine 5'-phosphate (PNP) or pyridoxamine 5'-phosphate (PMP) into pyridoxal 5'-phosphate (PLP). In Thermobifida fusca (strain YX), this protein is Pyridoxine/pyridoxamine 5'-phosphate oxidase.